We begin with the raw amino-acid sequence, 765 residues long: MLLRLLLAWVAAVPALGQVPWTPEPRAACGPSSCYALFPRRRTFLEAWRACRELGGNLATPRTPEEAQRVDSLVGVGPANGLLWIGLQRQARQCQPQRPLRGFIWTTGDQDTAFTNWAQPATEGPCPAQRCAALEASGEHRWLEGSCTLAVDGYLCQFGFEGACPALPLEVGQAGPAVYTTPFNLVSSEFEWLPFGSVAAVQCQAGRGASLLCVKQPSGGVGWSQTGPLCPGTGCGPDNGGCEHECVEEVDGAVSCRCSEGFRLAADGHSCEDPCAQAPCEQQCEPGGPQGYSCHCRLGFRPAEDDPHRCVDTDECQIAGVCQQMCVNYVGGFECYCSEGHELEADGISCSPAGAMGAQASQDLRDELLDDGEEGEDEEEPWEDFDGTWTEEQGILWLAPTHPPDFGLPYRPNFPQDGEPQRLHLEPTWPPPLSAPRGPYHSSVVSATRPMVISATRPTLPSAHKTSVISATRPPLSPVHPPAMAPATPPAVFSEHQIPKIKANYPDLPFGHKPGITSATHPARSPPYQPPIISTNYPQVFPPHQAPMSPDTHTITYLPPVPPHLDPGDTTSKAHQHPLLPDAPGIRTQAPQLSVSALQPPLPTNSRSSVHETPVPAANQPPAFPSSPLPPQRPTNQTSSISPTHSYSRAPLVPREGVPSPKSVPQLPSVPSTAAPTALAESGLAGQSQRDDRWLLVALLVPTCVFLVVLLALGIVYCTRCGSHAPNKRITDCYRWVTHAGNKSSTEPMPPRGSLTGVQTCRTSV.

An N-terminal signal peptide occupies residues 1-17; it reads MLLRLLLAWVAAVPALG. At 18–695 the chain is on the extracellular side; sequence QVPWTPEPRA…GQSQRDDRWL (678 aa). A C-type lectin domain is found at 30 to 156; that stretch reads GPSSCYALFP…CTLAVDGYLC (127 aa). Intrachain disulfides connect Cys-131-Cys-147, Cys-164-Cys-213, Cys-203-Cys-230, Cys-316-Cys-326, Cys-322-Cys-335, and Cys-337-Cys-350. Positions 162 to 232 constitute a Sushi domain; the sequence is GACPALPLEV…WSQTGPLCPG (71 aa). The EGF-like; calcium-binding domain maps to 312 to 351; that stretch reads DTDECQIAGVCQQMCVNYVGGFECYCSEGHELEADGISCS. O-linked (GalNAc...) threonine glycosylation is found at Thr-401, Thr-428, Thr-448, Thr-456, Thr-459, and Thr-466. Ser-467 and Ser-470 each carry an O-linked (GalNAc...) serine glycan. O-linked (GalNAc...) threonine glycosylation occurs at Thr-472. O-linked (GalNAc...) serine glycosylation is present at Ser-477. Residues Thr-488, Thr-517, Thr-520, Thr-535, Thr-552, Thr-554, Thr-556, Thr-570, Thr-571, Thr-604, and Thr-613 are each glycosylated (O-linked (GalNAc...) threonine). A disordered region spans residues 548 to 675; sequence MSPDTHTITY…QLPSVPSTAA (128 aa). Over residues 622-633 the composition is skewed to pro residues; that stretch reads PAFPSSPLPPQR. Ser-626 and Ser-627 each carry an O-linked (GalNAc...) serine glycan. Thr-635 and Thr-638 each carry an O-linked (GalNAc...) threonine glycan. Over residues 635–647 the composition is skewed to polar residues; it reads TNQTSSISPTHSY. 2 O-linked (GalNAc...) serine glycosylation sites follow: Ser-639 and Ser-640. O-linked (GalNAc...) threonine glycosylation occurs at Thr-644. Ser-663 carries an O-linked (GalNAc...) serine glycan. O-linked (GalNAc...) threonine glycosylation occurs at Thr-673. The chain crosses the membrane as a helical span at residues 696 to 716; that stretch reads LVALLVPTCVFLVVLLALGIV. The Cytoplasmic portion of the chain corresponds to 717-765; sequence YCTRCGSHAPNKRITDCYRWVTHAGNKSSTEPMPPRGSLTGVQTCRTSV. Ser-754 carries the post-translational modification Phosphoserine.

Interacts with PDGFRA; this interaction promotes PDGF receptor signaling pathway. Interacts with integrin beta-1/ITGB1. Interacts with insulin receptor/INSR; this interaction diminishes INSR autophosphorylation. Post-translationally, O-glycosylated by sialylated oligosaccharides. In terms of processing, may be N-glycosylated. In terms of tissue distribution, expressed in cell lines derived from endothelial cells, embryonic fibroblasts and preadipocytes. Expressed in skeletal muscle by a subset of pericytes.

The protein resides in the membrane. Its function is as follows. Cell surface glycoprotein involved in various biological processes including angiogenesis, immune response modulation, and tissue remodeling and repair. Participates in pericyte proliferation through positive modulation of the PDGF receptor signaling pathway. Acts as a scaffold for factor X, triggering allosteric changes and the spatial re-alignment of factor X with the TF-factor VIIa complex, thereby enhancing coagulation activation. Modulates the insulin signaling pathway by interacting with insulin receptor/INSR and by diminishing its capacity to be autophosphorylated in response to insulin. Also regulates LPS-induced inflammatory responses in macrophages by favoring production of proinflammatory cytokines. The protein is Endosialin (Cd248) of Mus musculus (Mouse).